The primary structure comprises 492 residues: Bifunctional protein GlmU (492 aa).

Residues 1 to 241 (MTFRGDTAVV…SALVAGVNDR (241 aa)) form a pyrophosphorylase region. Residues 12–15 (LAAG), Lys-26, Gln-83, and 88–89 (GT) each bind UDP-N-acetyl-alpha-D-glucosamine. Asp-114 is a Mg(2+) binding site. UDP-N-acetyl-alpha-D-glucosamine is bound by residues Gly-151, Glu-166, Asn-181, and Asn-239. Asn-239 is a Mg(2+) binding site. Positions 242-262 (VQLAQLGAELNRRIVAAHQMA) are linker. The interval 263–492 (GVTVIDPATT…TPPPDADQTP (230 aa)) is N-acetyltransferase. UDP-N-acetyl-alpha-D-glucosamine contacts are provided by Arg-344 and Lys-362. His-374 (proton acceptor) is an active-site residue. Positions 377 and 388 each coordinate UDP-N-acetyl-alpha-D-glucosamine. Acetyl-CoA-binding positions include Ala-391, 397-398 (NY), and Ala-434. The interval 451 to 492 (GGPQRNIEDWVQQKRPGTPSAEAARKASAEQSTPPPDADQTP) is disordered. Pro residues predominate over residues 483 to 492 (TPPPDADQTP).

In the N-terminal section; belongs to the N-acetylglucosamine-1-phosphate uridyltransferase family. The protein in the C-terminal section; belongs to the transferase hexapeptide repeat family. In terms of assembly, homotrimer. Mg(2+) serves as cofactor.

It is found in the cytoplasm. It carries out the reaction alpha-D-glucosamine 1-phosphate + acetyl-CoA = N-acetyl-alpha-D-glucosamine 1-phosphate + CoA + H(+). It catalyses the reaction N-acetyl-alpha-D-glucosamine 1-phosphate + UTP + H(+) = UDP-N-acetyl-alpha-D-glucosamine + diphosphate. The protein operates within nucleotide-sugar biosynthesis; UDP-N-acetyl-alpha-D-glucosamine biosynthesis; N-acetyl-alpha-D-glucosamine 1-phosphate from alpha-D-glucosamine 6-phosphate (route II): step 2/2. It functions in the pathway nucleotide-sugar biosynthesis; UDP-N-acetyl-alpha-D-glucosamine biosynthesis; UDP-N-acetyl-alpha-D-glucosamine from N-acetyl-alpha-D-glucosamine 1-phosphate: step 1/1. It participates in bacterial outer membrane biogenesis; LPS lipid A biosynthesis. Its function is as follows. Catalyzes the last two sequential reactions in the de novo biosynthetic pathway for UDP-N-acetylglucosamine (UDP-GlcNAc). The C-terminal domain catalyzes the transfer of acetyl group from acetyl coenzyme A to glucosamine-1-phosphate (GlcN-1-P) to produce N-acetylglucosamine-1-phosphate (GlcNAc-1-P), which is converted into UDP-GlcNAc by the transfer of uridine 5-monophosphate (from uridine 5-triphosphate), a reaction catalyzed by the N-terminal domain. In Mycobacterium marinum (strain ATCC BAA-535 / M), this protein is Bifunctional protein GlmU.